A 475-amino-acid chain; its full sequence is Ribulose bisphosphate carboxylase large chain (475 aa).

The propeptide occupies 1 to 2; sequence MS. Pro-3 is subject to N-acetylproline. Lys-14 is modified (N6,N6,N6-trimethyllysine). Substrate is bound by residues Asn-123 and Thr-173. Lys-175 functions as the Proton acceptor in the catalytic mechanism. Substrate is bound at residue Lys-177. Mg(2+)-binding residues include Lys-201, Asp-203, and Glu-204. At Lys-201 the chain carries N6-carboxylysine. His-294 (proton acceptor) is an active-site residue. 3 residues coordinate substrate: Arg-295, His-327, and Ser-379.

The protein belongs to the RuBisCO large chain family. Type I subfamily. In terms of assembly, heterohexadecamer of 8 large chains and 8 small chains; disulfide-linked. The disulfide link is formed within the large subunit homodimers. Requires Mg(2+) as cofactor. In terms of processing, the disulfide bond which can form in the large chain dimeric partners within the hexadecamer appears to be associated with oxidative stress and protein turnover.

It is found in the plastid. The protein localises to the chloroplast. It carries out the reaction 2 (2R)-3-phosphoglycerate + 2 H(+) = D-ribulose 1,5-bisphosphate + CO2 + H2O. It catalyses the reaction D-ribulose 1,5-bisphosphate + O2 = 2-phosphoglycolate + (2R)-3-phosphoglycerate + 2 H(+). RuBisCO catalyzes two reactions: the carboxylation of D-ribulose 1,5-bisphosphate, the primary event in carbon dioxide fixation, as well as the oxidative fragmentation of the pentose substrate in the photorespiration process. Both reactions occur simultaneously and in competition at the same active site. The protein is Ribulose bisphosphate carboxylase large chain of Keteleeria davidiana (David's keteleeria).